The sequence spans 853 residues: Leucine--tRNA ligase (853 aa).

The 'HIGH' region motif lies at 42–52 (PYPSGNLHMGH). Positions 615-619 (KMSKS) match the 'KMSKS' region motif. Residue lysine 618 coordinates ATP.

This sequence belongs to the class-I aminoacyl-tRNA synthetase family.

The protein localises to the cytoplasm. The catalysed reaction is tRNA(Leu) + L-leucine + ATP = L-leucyl-tRNA(Leu) + AMP + diphosphate. The polypeptide is Leucine--tRNA ligase (Crocosphaera subtropica (strain ATCC 51142 / BH68) (Cyanothece sp. (strain ATCC 51142))).